Here is a 119-residue protein sequence, read N- to C-terminus: MTRVPRGYIARRRRAKMRSFASNFRGAHLRLNRMITQQVRRAFVSSHRDRVRQKRDFRRLWISRINAATRIHKVFDNYSKLIHNLYKKELILNRKILAQVAVLNSNNLYTISNKIKIIN.

This sequence belongs to the bacterial ribosomal protein bL20 family.

The protein localises to the plastid. It is found in the chloroplast. Binds directly to 23S ribosomal RNA and is necessary for the in vitro assembly process of the 50S ribosomal subunit. It is not involved in the protein synthesizing functions of that subunit. This Oryza sativa (Rice) protein is Large ribosomal subunit protein bL20c (rpl20).